A 357-amino-acid polypeptide reads, in one-letter code: Peptide chain release factor 1 (357 aa).

Residue Gln234 is modified to N5-methylglutamine. Residues 249 to 308 (PSGVEVSCQDEKSQHKNRSKAMRVLRSRVYEKKREEQQAEREEARRSMVGSGDRSAKIRT) form a disordered region. Residues 263–274 (HKNRSKAMRVLR) are compositionally biased toward basic residues. A compositionally biased stretch (basic and acidic residues) spans 276-294 (RVYEKKREEQQAEREEARR).

The protein belongs to the prokaryotic/mitochondrial release factor family. In terms of processing, methylated by PrmC. Methylation increases the termination efficiency of RF1.

It localises to the cytoplasm. Its function is as follows. Peptide chain release factor 1 directs the termination of translation in response to the peptide chain termination codons UAG and UAA. The polypeptide is Peptide chain release factor 1 (Salinibacter ruber (strain DSM 13855 / M31)).